Consider the following 576-residue polypeptide: (+)-alpha-terpineol synthase (576 aa).

Arginine 286, aspartate 323, aspartate 327, arginine 466, and asparagine 469 together coordinate (2E)-geranyl diphosphate. Mg(2+)-binding residues include aspartate 323 and aspartate 327. The DDXXD motif signature appears at 323 to 327 (DDVYD). Mg(2+) contacts are provided by asparagine 469, threonine 473, and glutamate 477.

Belongs to the terpene synthase family. Tpsb subfamily. Mg(2+) serves as cofactor. It depends on Mn(2+) as a cofactor.

The enzyme catalyses (2E,6E)-farnesyl diphosphate = beta-bisabolene + diphosphate. The catalysed reaction is (2E)-geranyl diphosphate + H2O = (R)-alpha-terpineol + diphosphate. It catalyses the reaction (2E)-geranyl diphosphate = (4S)-limonene + diphosphate. The protein operates within secondary metabolite biosynthesis; terpenoid biosynthesis. Functionally, monoterpene synthase which catalyzes the conversion of (2E)-geranyl diphosphate (GPP) to (R)-alpha-terpineol and (4S)-limonene, as well as small quantities of linalool, myrcene, (-)-alpha-pinene, (+)-sabinene and geraniol. To a lower extent, catalyzes the conversion of (2E,6E)-farnesyl diphosphate (FPP) to beta-bisabolene. The sequence is that of (+)-alpha-terpineol synthase from Santalum album (White sandalwood).